A 368-amino-acid chain; its full sequence is Left-right determination factor 1 (368 aa).

An N-terminal signal peptide occupies residues 1-21 (MPFLWLCWALWALSLVSLREA). A propeptide spans 22–76 (LTGEQILGSLLQQLQLDQPPVLDKADVEGMVIPSHVRTQYVALLQHSHASRSRGK) (or 135). An N-linked (GlcNAc...) asparagine glycan is attached at asparagine 158. Cystine bridges form between cysteine 253/cysteine 266, cysteine 265/cysteine 318, cysteine 295/cysteine 353, and cysteine 299/cysteine 355.

Belongs to the TGF-beta family. Post-translationally, the processing of the protein may also occur at the second R-X-X-R site located at AA 132-135. Processing appears to be regulated in a cell-type specific manner.

The protein localises to the secreted. In terms of biological role, required for left-right axis determination as a regulator of LEFTY2 and NODAL. The chain is Left-right determination factor 1 (Lefty1) from Mus musculus (Mouse).